The following is a 492-amino-acid chain: Catalase-1 (492 aa).

Catalysis depends on residues His-65 and Asn-138. Tyr-348 lines the heme pocket.

The protein belongs to the catalase family. In terms of assembly, homotetramer. Heme serves as cofactor.

The protein localises to the peroxisome. It is found in the glyoxysome. It catalyses the reaction 2 H2O2 = O2 + 2 H2O. Functionally, occurs in almost all aerobically respiring organisms and serves to protect cells from the toxic effects of hydrogen peroxide. The chain is Catalase-1 (CAT1) from Triticum aestivum (Wheat).